The primary structure comprises 261 residues: MAAVTPTVPEFVNVVVSDGSQDAGLAMLLLSRPPTNAMTRQVYREVVAAANELGRRDDVAAVILYGGHEIFSAGDDMPELRTLSAQEADTAARIRQQAVDAVAAIPKPTVAAITGYALGAGLTLALAADWRVSGDNVKFGATEILAGLIPSGDGMARLTRAAGPSRAKELVFSGRFFDAEEALALGLIDDMVAPDDVYDAAAAWARRFLDGPPHALAAAKAGISDVYELAPAERIAAERRRYVEVFAAGQGGGSKGDRGGR.

Belongs to the enoyl-CoA hydratase/isomerase family.

It carries out the reaction a (3S)-3-hydroxyacyl-CoA = a (2E)-enoyl-CoA + H2O. It catalyses the reaction a 4-saturated-(3S)-3-hydroxyacyl-CoA = a (3E)-enoyl-CoA + H2O. Functionally, could possibly oxidize fatty acids using specific components. This Mycobacterium bovis (strain BCG / Pasteur 1173P2) protein is Probable enoyl-CoA hydratase EchA17 (echA17).